The sequence spans 61 residues: Defensin BmKDfsin1 (61 aa).

The first 25 residues, M1 to A25, serve as a signal peptide directing secretion. 3 disulfides stabilise this stretch: C29–C50, C36–C58, and C40–C60.

It belongs to the invertebrate defensin family. Type 2 subfamily. Highly expressed in non-venom gland (hemolymph) and moderately expressed in venom gland.

The protein resides in the secreted. Functionally, antibacterial peptide active against Gram-positive bacteria, but not on Gram-negative bacteria. Also has weak blocking activity on Kv1.1/KCNA1, Kv1.2/KCNA2, Kv1.3/KCNA3, KCa3.1/KCNN4/IK, KCa2.3/KCNN3/SK3 and Kv11.1/KCNH2/ERG1 channels (tested at 1 uM). It inhibits potassium channel current by interacting with the pore region. The sequence is that of Defensin BmKDfsin1 from Olivierus martensii (Manchurian scorpion).